Reading from the N-terminus, the 330-residue chain is Phenylalanine--tRNA ligase alpha subunit (330 aa).

Residue Glu-246 participates in Mg(2+) binding.

Belongs to the class-II aminoacyl-tRNA synthetase family. Phe-tRNA synthetase alpha subunit type 1 subfamily. In terms of assembly, tetramer of two alpha and two beta subunits. Requires Mg(2+) as cofactor.

Its subcellular location is the cytoplasm. It carries out the reaction tRNA(Phe) + L-phenylalanine + ATP = L-phenylalanyl-tRNA(Phe) + AMP + diphosphate + H(+). The chain is Phenylalanine--tRNA ligase alpha subunit from Sulfurovum sp. (strain NBC37-1).